The primary structure comprises 230 residues: Oxaloacetate tautomerase FAHD1, mitochondrial (230 aa).

A mitochondrion-targeting transit peptide spans 1-26; it reads MAAAAAAAAQRLLAASTKIIGVGRNY. Glu-73, Glu-75, and Asp-104 together coordinate Mg(2+).

The protein belongs to the FAH family. It depends on Mg(2+) as a cofactor. Mn(2+) is required as a cofactor.

Its subcellular location is the mitochondrion. It catalyses the reaction oxaloacetate = enol-oxaloacetate. Tautomerase that converts enol-oxaloacetate, a strong inhibitor of succinate dehydrogenase, to the physiological keto form of oxaloacetate. In Oryza sativa subsp. japonica (Rice), this protein is Oxaloacetate tautomerase FAHD1, mitochondrial.